A 192-amino-acid polypeptide reads, in one-letter code: Xanthine phosphoribosyltransferase (192 aa).

Positions 20 and 27 each coordinate xanthine. Residue 128 to 132 coordinates 5-phospho-alpha-D-ribose 1-diphosphate; that stretch reads AHGEA. K156 contributes to the xanthine binding site.

This sequence belongs to the purine/pyrimidine phosphoribosyltransferase family. Xpt subfamily. As to quaternary structure, homodimer.

The protein localises to the cytoplasm. The catalysed reaction is XMP + diphosphate = xanthine + 5-phospho-alpha-D-ribose 1-diphosphate. The protein operates within purine metabolism; XMP biosynthesis via salvage pathway; XMP from xanthine: step 1/1. Functionally, converts the preformed base xanthine, a product of nucleic acid breakdown, to xanthosine 5'-monophosphate (XMP), so it can be reused for RNA or DNA synthesis. This Lactobacillus gasseri (strain ATCC 33323 / DSM 20243 / BCRC 14619 / CIP 102991 / JCM 1131 / KCTC 3163 / NCIMB 11718 / NCTC 13722 / AM63) protein is Xanthine phosphoribosyltransferase.